A 579-amino-acid polypeptide reads, in one-letter code: Maintenance of mitochondrial morphology protein 1 (579 aa).

Residues Met1 to Gly43 lie on the Lumenal side of the membrane. The chain crosses the membrane as a helical span at residues Leu44–Phe64. The Cytoplasmic portion of the chain corresponds to Glu65–Gln579. The SMP-LTD domain occupies Leu150–Pro391. 3 disordered regions span residues Val309 to His332, Arg460 to Arg479, and Ser558 to Gln579. Low complexity-rich tracts occupy residues Pro311–Pro328 and Ser465–Ser476.

Belongs to the MMM1 family. Homodimer. Component of the ER-mitochondria encounter structure (ERMES) or MDM complex, composed of MMM1, MDM10, MDM12 and MDM34. An MMM1 homodimer associates with one molecule of MDM12 on each side in a pairwise head-to-tail manner, and the SMP-LTD domains of MMM1 and MDM12 generate a continuous hydrophobic tunnel for phospholipid trafficking.

The protein localises to the endoplasmic reticulum membrane. In terms of biological role, component of the ERMES/MDM complex, which serves as a molecular tether to connect the endoplasmic reticulum (ER) and mitochondria. Components of this complex are involved in the control of mitochondrial shape and protein biogenesis, and function in nonvesicular lipid trafficking between the ER and mitochondria. The MDM12-MMM1 subcomplex functions in the major beta-barrel assembly pathway that is responsible for biogenesis of all outer membrane beta-barrel proteins, and acts in a late step after the SAM complex. The MDM10-MDM12-MMM1 subcomplex further acts in the TOM40-specific pathway after the action of the MDM12-MMM1 complex. Essential for establishing and maintaining the structure of mitochondria and maintenance of mtDNA nucleoids. This is Maintenance of mitochondrial morphology protein 1 from Mycosarcoma maydis (Corn smut fungus).